Here is a 201-residue protein sequence, read N- to C-terminus: Small ribosomal subunit protein uS4c (201 aa).

The S4 RNA-binding domain maps to 89–149 (MRLDNILFRL…DKPKSGALIK (61 aa)).

It belongs to the universal ribosomal protein uS4 family. Part of the 30S ribosomal subunit. Contacts protein S5. The interaction surface between S4 and S5 is involved in control of translational fidelity.

It is found in the plastid. Its function is as follows. One of the primary rRNA binding proteins, it binds directly to 16S rRNA where it nucleates assembly of the body of the 30S subunit. Functionally, with S5 and S12 plays an important role in translational accuracy. The chain is Small ribosomal subunit protein uS4c (rps4) from Cuscuta exaltata (Tall dodder).